The sequence spans 315 residues: MTIDSGFNHITVLLDEAVEALALRADGCYLDGTFGRGGHSRLILSKLGPQGRLLGFDKDPQAIATGQALAAEDGRFVIVQRSFAELGAEVAARGLHGKVSGVLLDLGVSSPQLDDPERGFSFLNDGPLDMRMNPDQGVSAAEFIATAPVEEIARVFKEYGEERFAGRMARAVVERREKQPFTRTADLAEVLKVANPAWEKGKNPATRAFQGLRIHVNNELGDLEAGLEAALDALEVGGRLAVISFHSLEDRIVKLFMRKLVKGEADNLPRNLPVQHKVFEPKIKLIGKAQFASEAELKANPRSRSAVMRVAEKLR.

S-adenosyl-L-methionine-binding positions include 37–39 (GGH), aspartate 57, phenylalanine 83, aspartate 105, and glutamine 112.

Belongs to the methyltransferase superfamily. RsmH family.

Its subcellular location is the cytoplasm. It catalyses the reaction cytidine(1402) in 16S rRNA + S-adenosyl-L-methionine = N(4)-methylcytidine(1402) in 16S rRNA + S-adenosyl-L-homocysteine + H(+). Its function is as follows. Specifically methylates the N4 position of cytidine in position 1402 (C1402) of 16S rRNA. The chain is Ribosomal RNA small subunit methyltransferase H from Pseudomonas putida (strain ATCC 47054 / DSM 6125 / CFBP 8728 / NCIMB 11950 / KT2440).